The primary structure comprises 314 residues: Acetylglutamate kinase (314 aa).

Residues 76-77 (GG), Arg98, and Asn199 contribute to the substrate site.

It belongs to the acetylglutamate kinase family. ArgB subfamily.

It localises to the cytoplasm. The catalysed reaction is N-acetyl-L-glutamate + ATP = N-acetyl-L-glutamyl 5-phosphate + ADP. It participates in amino-acid biosynthesis; L-arginine biosynthesis; N(2)-acetyl-L-ornithine from L-glutamate: step 2/4. Its function is as follows. Catalyzes the ATP-dependent phosphorylation of N-acetyl-L-glutamate. The sequence is that of Acetylglutamate kinase from Bifidobacterium longum (strain DJO10A).